The following is a 1226-amino-acid chain: Polyamine-transporting ATPase 13A3 (1226 aa).

Residues 1–28 (MDREERKTINQGQEDEMEIYGYNLSRWK) are Cytoplasmic-facing. An intramembrane segment occupies 29-49 (LAIVSLGVICSGGFLLLLLYW). Topologically, residues 50 to 205 (MPEWRVKATC…IAVKVPSVFK (156 aa)) are cytoplasmic. The residue at position 98 (serine 98) is a Phosphoserine. Residues 206 to 226 (LLIKEVLNPFYIFQLFSVILW) form a helical membrane-spanning segment. At 227-232 (STDEYY) the chain is on the lumenal side. Residues 233 to 253 (YYALAIVVMSIVSIVSSLYSI) traverse the membrane as a helical segment. The Cytoplasmic segment spans residues 254–409 (RKQYVMLHDM…KPTDFKLYRD (156 aa)). The chain crosses the membrane as a helical span at residues 410-430 (AYLFLLCLVAVAGIGFIYTII). At 431 to 448 (NSILNEVQVGVIIIESLD) the chain is on the lumenal side. Residues 449 to 469 (IITITVPPALPAAMTAGIVYA) traverse the membrane as a helical segment. The Cytoplasmic segment spans residues 470-940 (QRRLKKIGIF…ALITSFCVFK (471 aa)). Aspartate 498 serves as the catalytic 4-aspartylphosphate intermediate. The Mg(2+) site is built by aspartate 498 and threonine 500. ATP-binding positions include 498 to 500 (DKT), phenylalanine 628, arginine 684, and aspartate 750. Phosphoserine is present on serine 817. Residues aspartate 883 and aspartate 887 each contribute to the Mg(2+) site. Residue 883–887 (DGAND) participates in ATP binding. The helical transmembrane segment at 941–961 (FMALYSIIQYFSVTLLYSILS) threads the bilayer. Residue asparagine 962 is a topological domain, lumenal. Residues 963-983 (LGDFQFLFIDLAIILVVVFTM) traverse the membrane as a helical segment. At 984–999 (SLNPAWKELVAQRPPS) the chain is on the cytoplasmic side. The chain crosses the membrane as a helical span at residues 1000-1020 (GLISGALLFSVLSQIIICIGF). Residues 1021–1073 (QSLGFFWVKQQPWYEVWHPKSDACNTTGSGFWNSSHVDNETELDEHNIQNYEN) are Lumenal-facing. The chain crosses the membrane as a helical span at residues 1074–1094 (TTVFFISSFQYLIVAIAFSKG). Over 1095–1105 (KPFRQPCYKNY) the chain is Cytoplasmic. A helical transmembrane segment spans residues 1106–1126 (FFVFSVIFLYIFILFIMLYPV). Residues 1127 to 1143 (ASVDQVLQIVCVPYQWR) are Lumenal-facing. The chain crosses the membrane as a helical span at residues 1144–1164 (VTMLIIVLVNAFVSITVEESV). The Cytoplasmic segment spans residues 1165–1226 (DRWGKCCLPW…NGSCQIITIT (62 aa)).

Belongs to the cation transport ATPase (P-type) (TC 3.A.3) family. Type V subfamily. Broadly expressed.

It localises to the recycling endosome membrane. Its subcellular location is the early endosome membrane. It is found in the late endosome membrane. It carries out the reaction putrescine(out) + ATP + H2O = putrescine(in) + ADP + phosphate + H(+). ATP-driven pump involved in endocytosis-dependent polyamine transport. Uses ATP as an energy source to transfer polyamine precursor putrescine from the endosomal compartment to the cytosol. The polypeptide is Polyamine-transporting ATPase 13A3 (Homo sapiens (Human)).